The chain runs to 336 residues: MSQLYQRHFLRLLDFIPDEINGLLKLASRLKATKKKGDETQYLKGKNIALIFEKDSTRTRCSFEVAAFDQGANVTWLGPSGSQIGHKESIKDTARVLGRMYHAIQYRGHGQQLVESLAEHAGVPVWNGLTNEFHPTQLLADLLTMQEHLPEKTLNQMTLAYVGDTQNNMGNTLLEAAALVGLDLRLVAPKSCWPDPALVAQCRDVAQQTGGKITLTEDIAAGVQGADFIYTDVWVSMGEPKEVWHERITLLRPYQVNMALLQATGNPQVKFLHCLPAFHDDQTLLGQQMAQQYDLHGGMEVTDEVFESAHSVVFDQAENRLHTIKAVMVATLSQQE.

Carbamoyl phosphate-binding positions include 56–59 (STRT), Gln-83, Arg-107, and 134–137 (HPTQ). L-ornithine is bound by residues Asn-168, Asp-232, and 236–237 (SM). Carbamoyl phosphate contacts are provided by residues 274-275 (CL) and Arg-320.

Belongs to the aspartate/ornithine carbamoyltransferase superfamily. OTCase family.

The protein localises to the cytoplasm. The enzyme catalyses carbamoyl phosphate + L-ornithine = L-citrulline + phosphate + H(+). Its pathway is amino-acid biosynthesis; L-arginine biosynthesis; L-arginine from L-ornithine and carbamoyl phosphate: step 1/3. Its function is as follows. Reversibly catalyzes the transfer of the carbamoyl group from carbamoyl phosphate (CP) to the N(epsilon) atom of ornithine (ORN) to produce L-citrulline. The sequence is that of Ornithine carbamoyltransferase from Erwinia tasmaniensis (strain DSM 17950 / CFBP 7177 / CIP 109463 / NCPPB 4357 / Et1/99).